An 80-amino-acid polypeptide reads, in one-letter code: Small ribosomal subunit protein bS16 (80 aa).

The protein belongs to the bacterial ribosomal protein bS16 family.

In Wigglesworthia glossinidia brevipalpis, this protein is Small ribosomal subunit protein bS16.